Here is a 365-residue protein sequence, read N- to C-terminus: Aminomethyltransferase (365 aa).

This sequence belongs to the GcvT family. In terms of assembly, the glycine cleavage system is composed of four proteins: P, T, L and H.

The catalysed reaction is N(6)-[(R)-S(8)-aminomethyldihydrolipoyl]-L-lysyl-[protein] + (6S)-5,6,7,8-tetrahydrofolate = N(6)-[(R)-dihydrolipoyl]-L-lysyl-[protein] + (6R)-5,10-methylene-5,6,7,8-tetrahydrofolate + NH4(+). Its function is as follows. The glycine cleavage system catalyzes the degradation of glycine. In Desulfitobacterium hafniense (strain Y51), this protein is Aminomethyltransferase.